The chain runs to 281 residues: Putative integrase/recombinase y4rD (281 aa).

In terms of domain architecture, Core-binding (CB) spans 5–98 (LLLAPLLESY…AIRSFFHHVA (94 aa)). The region spanning 122-281 (EVTHHLTKAE…TMSGTENASV (160 aa)) is the Tyr recombinase domain. Active-site residues include Arg162, Lys188, His262, and Arg265.

This sequence belongs to the 'phage' integrase family.

Functionally, seems to be non-functional. The chain is Putative integrase/recombinase y4rD from Sinorhizobium fredii (strain NBRC 101917 / NGR234).